We begin with the raw amino-acid sequence, 531 residues long: Nuclear RNA export factor 3 (531 aa).

2 disordered regions span residues 33–59 (RSEP…HGAH) and 83–106 (QDQT…GNMP). Residues 41–50 (MHSSSHQQQD) show a composition bias toward polar residues. Residues 83–102 (QDQTHVNMEREQKPPERRME) show a composition bias toward basic and acidic residues. The RRM domain maps to 113 to 192 (WFKITVPFGI…IFVNPAGIPH (80 aa)). Residues 344 to 494 (LVLQFLQQYY…LCIVNDKLFV (151 aa)) form the NTF2 domain.

The protein belongs to the NXF family. Interacts with NXT1, NXT2, E1B-AP5 and CRM1 nuclear export factor. As to expression, expressed at high level in testis and at low level in a small number of tissues.

It is found in the nucleus. The protein localises to the cytoplasm. Functionally, may function as a tissue-specific nuclear mRNA export factor. This Homo sapiens (Human) protein is Nuclear RNA export factor 3 (NXF3).